The following is a 275-amino-acid chain: UDP-Gal:alpha-D-GlcNAc-diphosphoundecaprenol beta-1,3-galactosyltransferase (275 aa).

It belongs to the glycosyltransferase 2 family. Mn(2+) serves as cofactor.

Its subcellular location is the cell inner membrane. It carries out the reaction N-acetyl-alpha-D-glucosaminyl-di-trans,octa-cis-undecaprenyl diphosphate + UDP-alpha-D-galactose = beta-D-Gal-(1-&gt;3)-alpha-D-GlcNAc-di-trans,octa-cis-undecaprenyl diphosphate + UDP + H(+). It functions in the pathway bacterial outer membrane biogenesis; LPS O-antigen biosynthesis. In terms of biological role, catalyzes the addition of Gal, the second sugar moiety of the O7-antigen repeating unit, to GlcNAc-pyrophosphate-undecaprenol. The protein is UDP-Gal:alpha-D-GlcNAc-diphosphoundecaprenol beta-1,3-galactosyltransferase (wbbD) of Escherichia coli.